Here is a 126-residue protein sequence, read N- to C-terminus: Fluoride-specific ion channel FluC (126 aa).

A run of 4 helical transmembrane segments spans residues 4 to 24, 38 to 58, 71 to 91, and 104 to 124; these read FAILGFIALGGAFGACSRYLV, YGTLTVNVVGSFIMGLLIAAF, IIGLGFLGALTTFSTFSMDNV, and LNVVLNVTLSITAAWVGFQLL. Na(+) contacts are provided by G78 and T81.

It belongs to the fluoride channel Fluc/FEX (TC 1.A.43) family.

Its subcellular location is the cell inner membrane. It catalyses the reaction fluoride(in) = fluoride(out). Na(+) is not transported, but it plays an essential structural role and its presence is essential for fluoride channel function. Functionally, fluoride-specific ion channel. Important for reducing fluoride concentration in the cell, thus reducing its toxicity. The sequence is that of Fluoride-specific ion channel FluC from Vibrio vulnificus (strain CMCP6).